A 286-amino-acid chain; its full sequence is Transcription factor egl-46 (286 aa).

Residues 180–200 (CICRLCKVKYEDVFKLAQHKC) form a C2H2-type 1; atypical zinc finger. 2 C2H2-type zinc fingers span residues 208 to 230 (YKCP…RRWH) and 248 to 271 (VSCS…STCQ).

The protein belongs to the INSM1 family. Interacts (via C-terminus) with egl-44 (via N-terminus); the interaction is direct; the interaction may regulate transcription. Expressed in touch cells, HSN cells, ventral cord motor neurons and ciliated ray neurons.

The protein localises to the nucleus. Transcription factor. Represses expression of genes involved in differentiation of touch receptor neurons (TRN), probably acting as a heterodimer with egl-44, perhaps by occupying similar cis-regulatory elements as an unc-86/mec-3 heterodimer. Plays a role in cell fate specification of neurons, including the hook neuron HOB, the gas-sensing neuron BAG and touch receptor neurons. Plays a role in neuron differentiation by repressing the expression of zag-1 in FLP neurons, probably acting as a heterodimer with egl-44; because zag-1 represses expression of egl-46 and egl-44, together these proteins form a bistable, negative-feedback loop that regulates the choice between neuronal fates. Acts downstream of egl-44 to prevent touch cell differentiation in FLP neurons. Involved in male mating behavior, acting in concert with egl-44, via modulation of expression of polycystins lov-1 and pkd-2, homeodomain protein ceh-26, and neuropeptide-like protein nlp-8. Modulates the expression of a subset of terminal differentiation genes involved in O(2)- and CO(2)-sensing, acting in parallel to ets-5 and egl-13. May act upstream of RFX transcription factor daf-19 to regulate gene expression specifically in the HOB neuron. Plays a role in specifying commissural dendrites of the PVD nociceptive neurons, acting in concert with egl-44. In association with egl-44, regulates cell cycle exit in the neuronal Q cell lineage. In Caenorhabditis elegans, this protein is Transcription factor egl-46.